The following is a 209-amino-acid chain: Large ribosomal subunit protein uL3 (209 aa).

Glutamine 150 is modified (N5-methylglutamine).

It belongs to the universal ribosomal protein uL3 family. As to quaternary structure, part of the 50S ribosomal subunit. Forms a cluster with proteins L14 and L19. Methylated by PrmB.

One of the primary rRNA binding proteins, it binds directly near the 3'-end of the 23S rRNA, where it nucleates assembly of the 50S subunit. This is Large ribosomal subunit protein uL3 from Photobacterium profundum (strain SS9).